Reading from the N-terminus, the 544-residue chain is Chaperonin GroEL (544 aa).

ATP-binding positions include 29 to 32 (TLGP), 86 to 90 (DGTTT), G413, 476 to 478 (NAL), and D492.

It belongs to the chaperonin (HSP60) family. As to quaternary structure, forms a cylinder of 14 subunits composed of two heptameric rings stacked back-to-back. Interacts with the co-chaperonin GroES.

It is found in the cytoplasm. It carries out the reaction ATP + H2O + a folded polypeptide = ADP + phosphate + an unfolded polypeptide.. Together with its co-chaperonin GroES, plays an essential role in assisting protein folding. The GroEL-GroES system forms a nano-cage that allows encapsulation of the non-native substrate proteins and provides a physical environment optimized to promote and accelerate protein folding. The protein is Chaperonin GroEL of Desulfitobacterium hafniense (strain DSM 10664 / DCB-2).